The following is a 456-amino-acid chain: Exodeoxyribonuclease 7 large subunit (456 aa).

This sequence belongs to the XseA family. As to quaternary structure, heterooligomer composed of large and small subunits.

Its subcellular location is the cytoplasm. The enzyme catalyses Exonucleolytic cleavage in either 5'- to 3'- or 3'- to 5'-direction to yield nucleoside 5'-phosphates.. Bidirectionally degrades single-stranded DNA into large acid-insoluble oligonucleotides, which are then degraded further into small acid-soluble oligonucleotides. The sequence is that of Exodeoxyribonuclease 7 large subunit from Escherichia coli (strain ATCC 8739 / DSM 1576 / NBRC 3972 / NCIMB 8545 / WDCM 00012 / Crooks).